Here is a 317-residue protein sequence, read N- to C-terminus: Ribosomal protein L11 methyltransferase (317 aa).

Residues Thr158, Gly179, Asp201, and Asn244 each contribute to the S-adenosyl-L-methionine site.

The protein belongs to the methyltransferase superfamily. PrmA family.

It is found in the cytoplasm. The enzyme catalyses L-lysyl-[protein] + 3 S-adenosyl-L-methionine = N(6),N(6),N(6)-trimethyl-L-lysyl-[protein] + 3 S-adenosyl-L-homocysteine + 3 H(+). Its function is as follows. Methylates ribosomal protein L11. In Streptococcus uberis (strain ATCC BAA-854 / 0140J), this protein is Ribosomal protein L11 methyltransferase.